Reading from the N-terminus, the 268-residue chain is Phosphatidylglycerol--prolipoprotein diacylglyceryl transferase (268 aa).

7 consecutive transmembrane segments (helical) span residues 21-41 (WYGIIIVSAIALSIWLGGRFA), 54-74 (FAIILVPAGILGARLYEVFVL), 93-113 (GLAIHGAVLGGAIAAAIYLPM), 122-142 (ADVVGLVLPLAQAIGRWGNFF), 173-193 (VMHPTFLYESVWNLLTFGILL), 203-223 (GVVFSLYLVLYNAGRFLIESI), and 236-256 (VAQLVAAVLAILGLVLLAWFL). R137 lines the a 1,2-diacyl-sn-glycero-3-phospho-(1'-sn-glycerol) pocket.

It belongs to the Lgt family.

It localises to the cell membrane. The enzyme catalyses L-cysteinyl-[prolipoprotein] + a 1,2-diacyl-sn-glycero-3-phospho-(1'-sn-glycerol) = an S-1,2-diacyl-sn-glyceryl-L-cysteinyl-[prolipoprotein] + sn-glycerol 1-phosphate + H(+). Its pathway is protein modification; lipoprotein biosynthesis (diacylglyceryl transfer). In terms of biological role, catalyzes the transfer of the diacylglyceryl group from phosphatidylglycerol to the sulfhydryl group of the N-terminal cysteine of a prolipoprotein, the first step in the formation of mature lipoproteins. In Symbiobacterium thermophilum (strain DSM 24528 / JCM 14929 / IAM 14863 / T), this protein is Phosphatidylglycerol--prolipoprotein diacylglyceryl transferase.